A 160-amino-acid polypeptide reads, in one-letter code: SsrA-binding protein (160 aa).

The tract at residues 136–160 is disordered; that stretch reads KRHVEKERDANREVQRAMRSKGKDD.

It belongs to the SmpB family.

It is found in the cytoplasm. Required for rescue of stalled ribosomes mediated by trans-translation. Binds to transfer-messenger RNA (tmRNA), required for stable association of tmRNA with ribosomes. tmRNA and SmpB together mimic tRNA shape, replacing the anticodon stem-loop with SmpB. tmRNA is encoded by the ssrA gene; the 2 termini fold to resemble tRNA(Ala) and it encodes a 'tag peptide', a short internal open reading frame. During trans-translation Ala-aminoacylated tmRNA acts like a tRNA, entering the A-site of stalled ribosomes, displacing the stalled mRNA. The ribosome then switches to translate the ORF on the tmRNA; the nascent peptide is terminated with the 'tag peptide' encoded by the tmRNA and targeted for degradation. The ribosome is freed to recommence translation, which seems to be the essential function of trans-translation. This Ectopseudomonas mendocina (strain ymp) (Pseudomonas mendocina) protein is SsrA-binding protein.